A 160-amino-acid chain; its full sequence is Endoribonuclease YbeY (160 aa).

Residues H118, H122, and H128 each contribute to the Zn(2+) site.

The protein belongs to the endoribonuclease YbeY family. It depends on Zn(2+) as a cofactor.

Its subcellular location is the cytoplasm. Functionally, single strand-specific metallo-endoribonuclease involved in late-stage 70S ribosome quality control and in maturation of the 3' terminus of the 16S rRNA. The chain is Endoribonuclease YbeY from Treponema pallidum (strain Nichols).